The chain runs to 1549 residues: ATP-binding cassette sub-family C member 9 (1549 aa).

Topologically, residues 1–30 are extracellular; that stretch reads MSLSFCGNNISSYNINDGVLQNSCFVDALN. A glycan (N-linked (GlcNAc...) asparagine) is linked at Asn-9. Residues 31-51 traverse the membrane as a helical segment; sequence LVPHVFLLFITFPILFIGWGS. At 52 to 72 the chain is on the cytoplasmic side; sequence QSSKVQIHHNTWLHFPGHNLR. Residues 73-93 traverse the membrane as a helical segment; that stretch reads WILTFALLFVHVCEIAEGIVS. The Extracellular portion of the chain corresponds to 94–101; it reads DSRRESRH. Residues 102 to 122 form a helical membrane-spanning segment; that stretch reads LHLFMPAVMGFVATTTSIVYY. Over 123–132 the chain is Cytoplasmic; the sequence is HNIETSNFPK. The chain crosses the membrane as a helical span at residues 133–153; sequence LLLALFLYWVMAFITKTIKLV. The Extracellular segment spans residues 154–167; sequence KYCQSGLDISNLRF. A helical membrane pass occupies residues 168–188; sequence CITGMMVILNGLLMAVEINVI. Residues 189-301 lie on the Cytoplasmic side of the membrane; sequence RVRRYVFFMN…AFGRPILLSS (113 aa). In terms of domain architecture, ABC transmembrane type-1 1 spans 297-597; it reads ILLSSTFRYL…LSTVVRFAVK (301 aa). A helical transmembrane segment spans residues 302-322; that stretch reads TFRYLADLLGFAGPLCISGIV. The Extracellular segment spans residues 323–350; the sequence is QRVNETQNGTNNTTGISETLSSKEFLEN. 4 N-linked (GlcNAc...) asparagine glycosylation sites follow: Asn-326, Asn-330, Asn-333, and Asn-334. A helical transmembrane segment spans residues 351–371; that stretch reads AYVLAVLLFLALILQRTFLQA. The Cytoplasmic portion of the chain corresponds to 372-423; sequence SYYVTIETGINLRGALLAMIYNKILRLSTSNLSMGEMTLGQINNLVAIETNQ. A helical membrane pass occupies residues 424 to 444; it reads LMWFLFLCPNLWAMPVQIIMG. Over 445–455 the chain is Extracellular; that stretch reads VILLYNLLGSS. A helical membrane pass occupies residues 456–476; sequence ALVGAAVIVLLAPIQYFIATK. At 477–531 the chain is on the cytoplasmic side; that stretch reads LAEAQKSTLDYSTERLKKTNEILKGIKLLKLYAWEHIFCKSVEETRMKELSSLKT. Residues 532–552 form a helical membrane-spanning segment; the sequence is FALYTSLSIFMNAAIPIAAVL. At 553-571 the chain is on the extracellular side; sequence ATFVTHAYASGNNLKPAEA. Residues 572–592 traverse the membrane as a helical segment; it reads FASLSLFHILVTPLFLLSTVV. Residues 593-990 are Cytoplasmic-facing; it reads RFAVKAIISV…TCWRYLTSGG (398 aa). Residues 672 to 912 form the ABC transporter 1 domain; sequence IKVTNGYFSW…DVELYEHWKT (241 aa). Residue 705–712 coordinates ATP; it reads GQVGCGKS. The tract at residues 944–967 is disordered; the sequence is REAKAQMEDEDEEEEEEEDEDDNM. A compositionally biased stretch (acidic residues) spans 951 to 966; the sequence is EDEDEEEEEEEDEDDN. Residues 991–1011 traverse the membrane as a helical segment; it reads FFLLILMIFSKLLKHSVIVAI. An ABC transmembrane type-1 2 domain is found at 994 to 1274; it reads LILMIFSKLL…VVRNLADLEV (281 aa). The Extracellular segment spans residues 1012–1034; it reads DYWLATWTSEYSINNTGKADQTY. The chain crosses the membrane as a helical span at residues 1035–1055; that stretch reads YVAGFSILCGAGIFLCLVTSL. Topologically, residues 1056–1127 are cytoplasmic; sequence TVEWMGLTAA…TLLCLSAIGM (72 aa). A helical membrane pass occupies residues 1128–1148; it reads ISYATPVFLVALLPLGVAFYF. Over 1149 to 1245 the chain is Extracellular; it reads IQKYFRVASK…IASISGSSNS (97 aa). The helical transmembrane segment at 1246–1266 threads the bilayer; sequence GLVGLGLLYALTITNYLNWVV. Residues 1267 to 1549 are Cytoplasmic-facing; it reads RNLADLEVQM…LFSTLVMTNK (283 aa). The 235-residue stretch at 1312–1546 folds into the ABC transporter 2 domain; sequence IKIHDLCVRY…KNGLFSTLVM (235 aa). 1346-1353 contributes to the ATP binding site; the sequence is GRTGSGKS.

This sequence belongs to the ABC transporter superfamily. ABCC family. Conjugate transporter (TC 3.A.1.208) subfamily. Interacts with KCNJ11. Interacts with KCNJ8.

Its subcellular location is the membrane. Its function is as follows. Subunit of ATP-sensitive potassium channels (KATP). Can form cardiac and smooth muscle-type KATP channels with KCNJ11. KCNJ11 forms the channel pore while ABCC9 is required for activation and regulation. Can form a sulfonylurea-sensitive but ATP-insensitive potassium channel with KCNJ8. The chain is ATP-binding cassette sub-family C member 9 (ABCC9) from Homo sapiens (Human).